The following is a 286-amino-acid chain: Protoheme IX farnesyltransferase (286 aa).

A run of 8 helical transmembrane segments spans residues 14 to 31 (FRLT…YILA), 38 to 58 (WLNL…ANII), 94 to 114 (LFLI…ALIL), 135 to 155 (IAVF…WIAV), 165 to 185 (VLFA…AWVL), 207 to 227 (TATI…LPYL), 228 to 248 (FGMS…LFFF), and 262 to 282 (ALLL…AFVL).

The protein belongs to the UbiA prenyltransferase family. Protoheme IX farnesyltransferase subfamily.

Its subcellular location is the cell inner membrane. It carries out the reaction heme b + (2E,6E)-farnesyl diphosphate + H2O = Fe(II)-heme o + diphosphate. Its pathway is porphyrin-containing compound metabolism; heme O biosynthesis; heme O from protoheme: step 1/1. Converts heme B (protoheme IX) to heme O by substitution of the vinyl group on carbon 2 of heme B porphyrin ring with a hydroxyethyl farnesyl side group. This Cytophaga hutchinsonii (strain ATCC 33406 / DSM 1761 / CIP 103989 / NBRC 15051 / NCIMB 9469 / D465) protein is Protoheme IX farnesyltransferase.